Here is a 214-residue protein sequence, read N- to C-terminus: Coiled-coil domain-containing protein 169 (214 aa).

The stretch at 56–138 (SEWKTRYETQ…YAFRLEQESK (83 aa)) forms a coiled coil. Residues 154 to 214 (MTQVSGSNQV…RSNHLPKLNP (61 aa)) are disordered. Polar residues-rich tracts occupy residues 155-166 (TQVSGSNQVSKR) and 185-195 (HNSMNQKTTNA).

The protein belongs to the CCDC169 family.

In Mus musculus (Mouse), this protein is Coiled-coil domain-containing protein 169 (Ccdc169).